A 154-amino-acid chain; its full sequence is NADPH-dependent 7-cyano-7-deazaguanine reductase (154 aa).

The active-site Thioimide intermediate is Cys52. Asp59 functions as the Proton donor in the catalytic mechanism. Substrate contacts are provided by residues Val74–Ser76 and His93–Glu94.

Belongs to the GTP cyclohydrolase I family. QueF type 1 subfamily.

The protein resides in the cytoplasm. The enzyme catalyses 7-aminomethyl-7-carbaguanine + 2 NADP(+) = 7-cyano-7-deazaguanine + 2 NADPH + 3 H(+). It participates in tRNA modification; tRNA-queuosine biosynthesis. Functionally, catalyzes the NADPH-dependent reduction of 7-cyano-7-deazaguanine (preQ0) to 7-aminomethyl-7-deazaguanine (preQ1). This is NADPH-dependent 7-cyano-7-deazaguanine reductase from Ruegeria sp. (strain TM1040) (Silicibacter sp.).